A 362-amino-acid polypeptide reads, in one-letter code: MNAALKTFAPSALALLLILPSSASAKEAETQQKLANVVILATGGTIAGAGASAANSATYQAAKLGVDKLIAGVPELADIANVRGEQVMQIASESISNDDLLKLGKRVAELAESKDVDGIVITHGTDTLEETAFFLNLVEKTDKPIVVVGSMRPGTAMSADGMLNLYNAVAVASDKQSRGKGVLVTMNDEIQSGRDVSKAVNIKTEAFKSAWGPMGMVVEGKSYWFRLPAKRHTVNSEFDIKQISSLPQVDIAYGYGNVTDTAYKALAQNGAKALIHAGTGNGSVSSRVVPALQELRKNGVQIIRSSHVNQGGFVLRNAEQPDDKNDWVVAHDLNPQKARILAMVAMTKTQDSKELQRIFWEY.

An N-terminal signal peptide occupies residues 1-25 (MNAALKTFAPSALALLLILPSSASA). An Asparaginase/glutaminase domain is found at 35–362 (ANVVILATGG…KELQRIFWEY (328 aa)). T45 serves as the catalytic Acyl-ester intermediate. Substrate is bound by residues S92 and 125 to 126 (TD).

This sequence belongs to the asparaginase 1 family. In terms of assembly, homotetramer.

It is found in the periplasm. The enzyme catalyses L-glutamine + H2O = L-glutamate + NH4(+). It carries out the reaction L-asparagine + H2O = L-aspartate + NH4(+). The polypeptide is Glutaminase-asparaginase (ansB) (Pseudomonas putida (strain ATCC 47054 / DSM 6125 / CFBP 8728 / NCIMB 11950 / KT2440)).